The chain runs to 385 residues: Arginine biosynthesis bifunctional protein ArgJ (385 aa).

Residues Thr142, Lys168, Thr179, Glu259, Asn380, and Thr385 each contribute to the substrate site. Thr179 (nucleophile) is an active-site residue.

It belongs to the ArgJ family. In terms of assembly, heterotetramer of two alpha and two beta chains.

It localises to the cytoplasm. The catalysed reaction is N(2)-acetyl-L-ornithine + L-glutamate = N-acetyl-L-glutamate + L-ornithine. It carries out the reaction L-glutamate + acetyl-CoA = N-acetyl-L-glutamate + CoA + H(+). It participates in amino-acid biosynthesis; L-arginine biosynthesis; L-ornithine and N-acetyl-L-glutamate from L-glutamate and N(2)-acetyl-L-ornithine (cyclic): step 1/1. Its pathway is amino-acid biosynthesis; L-arginine biosynthesis; N(2)-acetyl-L-ornithine from L-glutamate: step 1/4. In terms of biological role, catalyzes two activities which are involved in the cyclic version of arginine biosynthesis: the synthesis of N-acetylglutamate from glutamate and acetyl-CoA as the acetyl donor, and of ornithine by transacetylation between N(2)-acetylornithine and glutamate. The polypeptide is Arginine biosynthesis bifunctional protein ArgJ (Leptospira interrogans serogroup Icterohaemorrhagiae serovar copenhageni (strain Fiocruz L1-130)).